A 221-amino-acid chain; its full sequence is MNRLIIVCLVAAMIYSTIALPMKEDISNDERPISVNEEPVKKNAAVAGAVIQGATLTFQVLDRILTVLGDISRKIAIGVDNESGRKWTAKNAYFFSGTSDVVLPYSVPNGKAFLYDGKKTRGPVATGAVGVLAYSMSDGNTLGILFSVPYDYNWYENWWNIKVYSGSKRANKWMYENLYYNASPHKGDNGWHEKSLGYGLKSRGYMASSGQTKLEIRVTRA.

The first 19 residues, 1–19 (MNRLIIVCLVAAMIYSTIA), serve as a signal peptide directing secretion. Residues 20 to 42 (LPMKEDISNDERPISVNEEPVKK) constitute a propeptide that is removed on maturation. The phosphocholine site is built by S96, V129, S147, P149, Y175, Y179, and Y180. The interval 147–162 (SVPYDYNWYENWWNIK) is trp-rich region, which is important for the binding to lipid membrane. Residues 186 to 188 (KGD) carry the Cell attachment site, crucial for protein stability motif.

The protein belongs to the actinoporin family. Sea anemone subfamily. As to quaternary structure, octamer or nonamer in membranes. Monomer in the soluble state. In terms of tissue distribution, expressed in actinopharynx and in gastric filaments. Is not expressed in tentacles.

It is found in the secreted. It localises to the nematocyst. The protein resides in the target cell membrane. Functionally, may be involved in digestion of prey. Pore-forming protein that forms cations-selective hydrophilic pores of around 1 nm and causes cytolysis. Pore formation is a multi-step process that involves specific recognition of membrane sphingomyelin (but neither cholesterol nor phosphatidylcholine) using aromatic rich region and adjacent phosphocholine (POC) binding site, firm binding to the membrane (mainly driven by hydrophobic interactions) accompanied by the transfer of the N-terminal region to the lipid-water interface and finally pore formation after oligomerization of monomers. Shows hemolytic activity on equine erythrocytes. Hemolysis is highly inhibited in presence of sphingomyelin, suggesting that this protein targets sphingomyelin. The sequence is that of Deep sea actinoporin Cjtox II from Cribrinopsis japonica (Deep-sea anemone).